An 898-amino-acid polypeptide reads, in one-letter code: Metalloprotease StcE (898 aa).

Positions 1 to 35 (MNTKMNERWRTPMKLKYLSCTILAPLAIGVFSATA) are cleaved as a signal peptide. A Peptidase M66 domain is found at 296–551 (ELLLHTIDIG…QRFFENKAVF (256 aa)). His446 lines the Zn(2+) pocket. The active site involves Glu447. Zn(2+)-binding residues include His450 and His456.

It depends on Zn(2+) as a cofactor.

Its subcellular location is the secreted. Its activity is regulated as follows. Inhibited by divalent cation chelators such as BPS and EDTA. In terms of biological role, virulence factor that contributes to intimate adherence of enterohemorrhagic E.coli (EHEC) O157:H7 to host cells. Is able to cleave the secreted human mucin 7 (MUC7) and the glycoprotein 340 (DMBT1/GP340). Also cleaves human C1 inhibitor (SERPING1), a regulator of multiple inflammatory pathways, and binds and localizes it to bacterial and host cell surfaces, protecting them from complement-mediated lysis. Therefore, the current model proposes two roles for StcE during infection: it acts first as a mucinase, allowing passage of EHEC through the oral cavity by cleaving the salivary glycoproteins that are responsible for bacterial aggregation. Similarly, in the colon, StcE cleaves the glycoproteins that protect the intestinal epithelial surface, allowing EHEC to come into close contact with host cell membranes. Secondly, it acts as an anti-inflammatory agent by localizing SERPING1 to cell membranes. The sequence is that of Metalloprotease StcE (stcE) from Escherichia coli O157:H7.